The chain runs to 610 residues: UvrABC system protein C (610 aa).

Residues 16-94 form the GIY-YIG domain; it reads SQPGVYRMYD…IKLYQPRYNV (79 aa). In terms of domain architecture, UVR spans 204-239; it reads DQVLTQLISRMETASQNLEFEEAARIRDQIQAVRRV.

Belongs to the UvrC family. As to quaternary structure, interacts with UvrB in an incision complex.

Its subcellular location is the cytoplasm. The UvrABC repair system catalyzes the recognition and processing of DNA lesions. UvrC both incises the 5' and 3' sides of the lesion. The N-terminal half is responsible for the 3' incision and the C-terminal half is responsible for the 5' incision. The polypeptide is UvrABC system protein C (Escherichia coli (strain SMS-3-5 / SECEC)).